We begin with the raw amino-acid sequence, 1125 residues long: Exportin-6 (1125 aa).

Ala2 is subject to N-acetylalanine. An Importin N-terminal domain is found at 31-97; sequence IEELLNNFAQ…RSCLPKLLLA (67 aa). Position 199 is a phosphoserine (Ser199). Phosphothreonine occurs at positions 201 and 204. Ser208 and Ser224 each carry phosphoserine.

This sequence belongs to the exportin family. As to quaternary structure, found in a complex with XPO6, Ran, ACTB and PFN1. Interacts with ACTB. Interacts with ACTB in a RanGTP-dependent manner.

The protein resides in the nucleus. Its subcellular location is the cytoplasm. In terms of biological role, mediates the nuclear export of actin and profilin-actin complexes in somatic cells. The polypeptide is Exportin-6 (XPO6) (Homo sapiens (Human)).